A 379-amino-acid chain; its full sequence is Cytochrome b (379 aa).

4 helical membrane passes run 33–53 (FGSLLGLCLIAQILTGLFLAM), 77–98 (WLIRNMHANGASFFFICIYLHI), 113–133 (WNVGVVLLLLVMMTAFVGYVL), and 178–198 (FFAFHFLLPFIGAAATLVHLI). Heme b contacts are provided by histidine 83 and histidine 97. 2 residues coordinate heme b: histidine 182 and histidine 196. Histidine 201 lines the a ubiquinone pocket. The next 4 helical transmembrane spans lie at 226–246 (YKDILGFTFLLTALIALALFS), 288–308 (LGGVLALLASILVLMVVPLLH), 320–340 (FTQVLFWLLIADVAILTWIGG), and 347–367 (FIIIGQVASFLYFSLFLVLAP).

Belongs to the cytochrome b family. The cytochrome bc1 complex contains 3 respiratory subunits (MT-CYB, CYC1 and UQCRFS1), 2 core proteins (UQCRC1 and UQCRC2) and probably 6 low-molecular weight proteins. It depends on heme b as a cofactor.

It is found in the mitochondrion inner membrane. Component of the ubiquinol-cytochrome c reductase complex (complex III or cytochrome b-c1 complex) that is part of the mitochondrial respiratory chain. The b-c1 complex mediates electron transfer from ubiquinol to cytochrome c. Contributes to the generation of a proton gradient across the mitochondrial membrane that is then used for ATP synthesis. This Poeciliopsis occidentalis (Gila topminnow) protein is Cytochrome b (mt-cyb).